Reading from the N-terminus, the 95-residue chain is Large ribosomal subunit protein bL25 (95 aa).

Residues 1 to 20 are disordered; sequence MSFKFNAEVRSKQGKGASRR.

This sequence belongs to the bacterial ribosomal protein bL25 family. In terms of assembly, part of the 50S ribosomal subunit; part of the 5S rRNA/L5/L18/L25 subcomplex. Contacts the 5S rRNA. Binds to the 5S rRNA independently of L5 and L18.

This is one of the proteins that binds to the 5S RNA in the ribosome where it forms part of the central protuberance. The chain is Large ribosomal subunit protein bL25 from Histophilus somni (strain 129Pt) (Haemophilus somnus).